Here is a 93-residue protein sequence, read N- to C-terminus: Small ribosomal subunit protein uS19 (93 aa).

Belongs to the universal ribosomal protein uS19 family.

In terms of biological role, protein S19 forms a complex with S13 that binds strongly to the 16S ribosomal RNA. This chain is Small ribosomal subunit protein uS19, found in Micrococcus luteus (strain ATCC 4698 / DSM 20030 / JCM 1464 / CCM 169 / CCUG 5858 / IAM 1056 / NBRC 3333 / NCIMB 9278 / NCTC 2665 / VKM Ac-2230) (Micrococcus lysodeikticus).